The chain runs to 118 residues: Mu-like prophage FluMu tail tube protein (118 aa).

Residues 12–32 are disordered; sequence RLNGKEWPSDNDGTLTPGGKE.

It to phage Mu protein M.

This chain is Mu-like prophage FluMu tail tube protein, found in Haemophilus influenzae (strain ATCC 51907 / DSM 11121 / KW20 / Rd).